Consider the following 452-residue polypeptide: tRNA modification GTPase MnmE (452 aa).

3 residues coordinate (6S)-5-formyl-5,6,7,8-tetrahydrofolate: arginine 21, glutamate 82, and arginine 121. A TrmE-type G domain is found at 217 to 373; sequence GINTTIIGKP…LENKIIEMFN (157 aa). Residue asparagine 227 participates in K(+) binding. Residues 227–232, 246–252, and 271–274 each bind GTP; these read NVGKSS, TDIPGTT, and DTAG. Serine 231 contacts Mg(2+). Residues threonine 246, isoleucine 248, and threonine 251 each coordinate K(+). Residue threonine 252 coordinates Mg(2+). Lysine 452 contacts (6S)-5-formyl-5,6,7,8-tetrahydrofolate.

This sequence belongs to the TRAFAC class TrmE-Era-EngA-EngB-Septin-like GTPase superfamily. TrmE GTPase family. Homodimer. Heterotetramer of two MnmE and two MnmG subunits. Requires K(+) as cofactor.

Its subcellular location is the cytoplasm. Its function is as follows. Exhibits a very high intrinsic GTPase hydrolysis rate. Involved in the addition of a carboxymethylaminomethyl (cmnm) group at the wobble position (U34) of certain tRNAs, forming tRNA-cmnm(5)s(2)U34. The chain is tRNA modification GTPase MnmE from Finegoldia magna (strain ATCC 29328 / DSM 20472 / WAL 2508) (Peptostreptococcus magnus).